The primary structure comprises 695 residues: MQRQNTQAAGMPMMPQVPMVGNGVPYVVPIQPVFAPLPPDYRSLYKKLYGQGAFLVDNPVEASSPYDFSQPILKFGKLPIKQVLRDNESQQKDRKNLPRNQKSNEIQEKQTFQTPSSEKSTTERESRPFVPPNSQQMRRMLFIGNIPKELDDFWMDKILRLSGKLASWRRVADADNSMTSFGFAEFESNEQFSRALEALNDFVVPPLYEGGPSTRLSLITDVENEGLYREWQTSRYARNKQKEINILQQIRFNLERICQDIGNFDVRSRIERAARQAREKNEKLLQNVKTSEIPINAADLEGINPELLPVIEEEIRSFRDQSAMKKREKQRSKDEYASLYKEYTRKEQEKLRKQNDDLQNLLSKHRISRIPMSTVNAFLRAEDSIPESFSDEQAYYEEKRRKDQLEAEEYYARERRWMNREKARTAALEREAAREEEERVNNTSFGTYLSEKLASFDDDEEARVSRDEYFVDRAAWIRHRAVARAREEDADALDRKEEERELRTRGEGATVETENYVENGKLVTSEMPQHENGPFKIKIQTKKPAVPSERREFGLPERLLLEEEDEEPQGYSPNPQKPKPAMEENDAEKTKRLRSLIEKIPVEAESLWALPIDWSKVTEDLLKEEMQAFVTKKIIEYIGIQEDSLITFTIDHIRQHKGAEQLVSELDLALAEDAPEFVSKVYRYLHVLLILRSEA.

Residues 85-96 are compositionally biased toward basic and acidic residues; that stretch reads RDNESQQKDRKN. Residues 85 to 134 are disordered; that stretch reads RDNESQQKDRKNLPRNQKSNEIQEKQTFQTPSSEKSTTERESRPFVPPNS. Residues 98-113 are compositionally biased toward polar residues; sequence PRNQKSNEIQEKQTFQ. Positions 139–221 constitute an RRM domain; sequence RMLFIGNIPK…PSTRLSLITD (83 aa). Residues 265–369 are a coiled coil; that stretch reads DVRSRIERAA…NLLSKHRISR (105 aa). Basic and acidic residues-rich tracts occupy residues 487–506 and 548–561; these read EEDADALDRKEEERELRTRG and SERREFGLPERLLL. Disordered stretches follow at residues 487 to 509 and 540 to 590; these read EEDADALDRKEEERELRTRGEGA and QTKK…AEKT. The 91-residue stretch at 605–695 folds into the PWI domain; that stretch reads ESLWALPIDW…HVLLILRSEA (91 aa).

Component of the U1 snRNP particle, a subcomplex of the spliceosome. Interacts with prp5 and usp102.

It is found in the cytoplasm. The protein resides in the nucleus. Component of the U1 snRNP particle, which recognizes and binds the 5'-splice site of pre-mRNA. Together with other non-snRNP factors, U1 snRNP forms the spliceosomal commitment complex, that targets pre-mRNA to the splicing pathway. The protein is U1 snRNP-associated protein usp107 (usp107) of Schizosaccharomyces pombe (strain 972 / ATCC 24843) (Fission yeast).